The chain runs to 459 residues: Sensor histidine kinase SpaK (459 aa).

At 1–18 the chain is on the cytoplasmic side; the sequence is MGIGFKGRKTLLRELVKY. Residues 19-39 traverse the membrane as a helical segment; it reads MVTLCISLVVLALLYIFINTI. Residues 40–155 lie on the Extracellular side of the membrane; it reads AMNTGFSHPA…RKYLPNYELT (116 aa). The chain crosses the membrane as a helical span at residues 156 to 176; that stretch reads SICILIILLIIVISIITTYFA. The Cytoplasmic segment spans residues 177–459; sequence NRLRKHFETL…VRVKIPLRNE (283 aa). A Histidine kinase domain is found at 244–458; it reads ALAHEIKIPI…EVRVKIPLRN (215 aa). H247 carries the post-translational modification Phosphohistidine; by autocatalysis.

It is found in the cell membrane. It catalyses the reaction ATP + protein L-histidine = ADP + protein N-phospho-L-histidine.. In terms of biological role, member of the two-component regulatory system SpaK/SpaR involved in the regulation of the biosynthesis of lantibiotic subtilin. SpaK may function as a membrane-associated protein kinase that phosphorylates SpaR in response to environmental signals. In Bacillus subtilis, this protein is Sensor histidine kinase SpaK (spaK).